The primary structure comprises 623 residues: Laccase-1 (623 aa).

The N-terminal stretch at 1–22 is a signal peptide; the sequence is MKTFTSALALVVGMLAPGAVVA. Residues 23 to 50 constitute a propeptide that is removed on maturation; that stretch reads APPSTPAQRDLVELREARQEGGKDLRPR. Cysteine 54 and cysteine 62 are disulfide-bonded. N-linked (GlcNAc...) asparagine glycans are attached at residues asparagine 89 and asparagine 138. The Cu cation site is built by histidine 143, histidine 145, histidine 188, and histidine 190. 2 cysteine pairs are disulfide-bonded: cysteine 164/cysteine 590 and cysteine 348/cysteine 382. 4 N-linked (GlcNAc...) asparagine glycosylation sites follow: asparagine 251, asparagine 266, asparagine 294, and asparagine 339. Asparagine 426 and asparagine 446 each carry an N-linked (GlcNAc...) asparagine glycan. The Cu cation site is built by histidine 481, histidine 484, histidine 486, histidine 552, cysteine 553, histidine 554, and histidine 558. The propeptide occupies 610 to 623; it reads KRRRWVEESEWLVR.

This sequence belongs to the multicopper oxidase family. Monomer. Requires Cu cation as cofactor. In terms of tissue distribution, secreted protein; extracellular space.

It catalyses the reaction 4 hydroquinone + O2 = 4 benzosemiquinone + 2 H2O. Lignin degradation and detoxification of lignin-derived products. The chain is Laccase-1 (LAC1) from Melanocarpus albomyces.